The chain runs to 200 residues: 3-isopropylmalate dehydratase small subunit (200 aa).

The protein belongs to the LeuD family. LeuD type 1 subfamily. As to quaternary structure, heterodimer of LeuC and LeuD.

It catalyses the reaction (2R,3S)-3-isopropylmalate = (2S)-2-isopropylmalate. It participates in amino-acid biosynthesis; L-leucine biosynthesis; L-leucine from 3-methyl-2-oxobutanoate: step 2/4. In terms of biological role, catalyzes the isomerization between 2-isopropylmalate and 3-isopropylmalate, via the formation of 2-isopropylmaleate. This chain is 3-isopropylmalate dehydratase small subunit, found in Vibrio cholerae serotype O1 (strain ATCC 39541 / Classical Ogawa 395 / O395).